Reading from the N-terminus, the 248-residue chain is Adenosylcobinamide-GDP ribazoletransferase (248 aa).

8 helical membrane-spanning segments follow: residues glutamate 3–isoleucine 23, serine 35–leucine 55, isoleucine 63–glycine 83, leucine 109–serine 129, leucine 135–isoleucine 155, phenylalanine 180–aspartate 199, leucine 200–serine 219, and aspartate 228–leucine 248.

It belongs to the CobS family. It depends on Mg(2+) as a cofactor.

The protein resides in the cell membrane. It carries out the reaction alpha-ribazole + adenosylcob(III)inamide-GDP = adenosylcob(III)alamin + GMP + H(+). It catalyses the reaction alpha-ribazole 5'-phosphate + adenosylcob(III)inamide-GDP = adenosylcob(III)alamin 5'-phosphate + GMP + H(+). The protein operates within cofactor biosynthesis; adenosylcobalamin biosynthesis; adenosylcobalamin from cob(II)yrinate a,c-diamide: step 7/7. Joins adenosylcobinamide-GDP and alpha-ribazole to generate adenosylcobalamin (Ado-cobalamin). Also synthesizes adenosylcobalamin 5'-phosphate from adenosylcobinamide-GDP and alpha-ribazole 5'-phosphate. This chain is Adenosylcobinamide-GDP ribazoletransferase, found in Caldanaerobacter subterraneus subsp. tengcongensis (strain DSM 15242 / JCM 11007 / NBRC 100824 / MB4) (Thermoanaerobacter tengcongensis).